The following is a 408-amino-acid chain: uncharacterized protein (408 aa).

The helical transmembrane segment at 56–76 (YWAGPAAASMVAAVTPYVAWL) threads the bilayer.

Belongs to the mycobacterial PPE family.

It is found in the cell membrane. This is an uncharacterized protein from Mycobacterium bovis (strain ATCC BAA-935 / AF2122/97).